We begin with the raw amino-acid sequence, 78 residues long: Large ribosomal subunit protein bL28 (78 aa).

The interval 1-29 (MSAHCQVTGRKPSFGKSVSHSHRRTSRRW) is disordered.

Belongs to the bacterial ribosomal protein bL28 family.

This chain is Large ribosomal subunit protein bL28, found in Corynebacterium glutamicum (strain ATCC 13032 / DSM 20300 / JCM 1318 / BCRC 11384 / CCUG 27702 / LMG 3730 / NBRC 12168 / NCIMB 10025 / NRRL B-2784 / 534).